Reading from the N-terminus, the 183-residue chain is Large ribosomal subunit protein uL5 (183 aa).

It belongs to the universal ribosomal protein uL5 family. Part of the 50S ribosomal subunit; part of the 5S rRNA/L5/L18/L25 subcomplex. Contacts the 5S rRNA and the P site tRNA. Forms a bridge to the 30S subunit in the 70S ribosome.

Functionally, this is one of the proteins that bind and probably mediate the attachment of the 5S RNA into the large ribosomal subunit, where it forms part of the central protuberance. In the 70S ribosome it contacts protein S13 of the 30S subunit (bridge B1b), connecting the 2 subunits; this bridge is implicated in subunit movement. Contacts the P site tRNA; the 5S rRNA and some of its associated proteins might help stabilize positioning of ribosome-bound tRNAs. The chain is Large ribosomal subunit protein uL5 from Fusobacterium nucleatum subsp. nucleatum (strain ATCC 25586 / DSM 15643 / BCRC 10681 / CIP 101130 / JCM 8532 / KCTC 2640 / LMG 13131 / VPI 4355).